A 787-amino-acid polypeptide reads, in one-letter code: MKAVETRILELRAELDEHNYRYHVLDEPSIPDVEYDRLFHELKALEAENPHLVTPDSPTQRVGSAALSAFTQVRHEMPMLSLGNAFEENDMLEFDRRVTEGLDLPAGDLFGAGSKVQYSCEPKLDGLAVSLLYRDGALVRGATRGDGTTGEDISVNVRTVRNIPLKLKGKGWPDVLEVRGEVFMSKAGFERLNASQLEIGGKTFANPRNAAAGSLRQLDSKITANRPLEFCCYGLGQTSAEIADTHIGVLETLKKWGMPVSHELKLANGVEECLDYYRDIGERRLTLSYEIDGVVFKVNNLAAQRELGFRAREPRWAIAHKFPAMEELTELLDVEFQVGRTGAVTPVARLKPVKVAGVMVANATLHNMDEVARLGLMIGDTVIIRRAGDVIPQVVQVVAERRPENARAVQVPQTCPVCGSHVERTQLIKRSKGKETVTEGAVYRCVGRLACGAQLKQAIIHYVSRRAMDIEGLGDKTIEQLVDEKLIGSPADLYKLKYEQIIDLEGFAEISSNKLLKAIADSRQPTLARFIYALGIPDVGEETAKVLARSLASLDRVKQALPEVLTYLPDVGLEVAYEIHSFFEDEHNRNVIDALLGECGLQLQDQGELGAEFAASTTLEGLIDKLHIPSVGPGAAQKLADRFGTLEAIISADWLDMRQTLPEKQAKSVRDFFDDSAHAERARAIEAQLKDFGMHWRSEKKTVEGLPLAGQTWVLTGSLERMSRDVAKEKLESLGAKVSGSVSAKTHTVVAGPGAGSKLTKANELGLTVLDEDALLKRLTELGVAVD.

NAD(+)-binding positions include 32–36 (DVEYD), 81–82 (SL), and E121. K123 functions as the N6-AMP-lysine intermediate in the catalytic mechanism. Positions 144, 181, 297, and 321 each coordinate NAD(+). C415, C418, C445, and C451 together coordinate Zn(2+). The BRCT domain maps to 703–787 (VEGLPLAGQT…RLTELGVAVD (85 aa)).

The protein belongs to the NAD-dependent DNA ligase family. LigA subfamily. The cofactor is Mg(2+). It depends on Mn(2+) as a cofactor.

It carries out the reaction NAD(+) + (deoxyribonucleotide)n-3'-hydroxyl + 5'-phospho-(deoxyribonucleotide)m = (deoxyribonucleotide)n+m + AMP + beta-nicotinamide D-nucleotide.. Its function is as follows. DNA ligase that catalyzes the formation of phosphodiester linkages between 5'-phosphoryl and 3'-hydroxyl groups in double-stranded DNA using NAD as a coenzyme and as the energy source for the reaction. It is essential for DNA replication and repair of damaged DNA. In Pseudomonas savastanoi pv. phaseolicola (strain 1448A / Race 6) (Pseudomonas syringae pv. phaseolicola (strain 1448A / Race 6)), this protein is DNA ligase.